The chain runs to 448 residues: NADP-specific glutamate dehydrogenase (448 aa).

Substrate contacts are provided by K88, Q109, and K112. K124 functions as the Proton donor in the catalytic mechanism. Substrate is bound at residue G163. Residues T207 and N238 each contribute to the NADP(+) site. Residue S381 participates in substrate binding.

This sequence belongs to the Glu/Leu/Phe/Val dehydrogenases family. Homohexamer.

The catalysed reaction is L-glutamate + NADP(+) + H2O = 2-oxoglutarate + NH4(+) + NADPH + H(+). In terms of biological role, catalyzes the reversible oxidative deamination of glutamate to alpha-ketoglutarate and ammonia. This chain is NADP-specific glutamate dehydrogenase (gdhA), found in Helicobacter pylori (strain J99 / ATCC 700824) (Campylobacter pylori J99).